The following is a 203-amino-acid chain: MNKGKLFVISAPSGAGKTTILGRVMANVGRLNFSISHTTRTARPGEQDGVDYHFVEQEDFIEMQEKGIFLESAYVHKNYYGTSREAVMAQLSEGVDVVLDIDVQGATILMESASLPATYIFIAPPDLSVLEERLRKRGSDSEETIKLRMGNAAGEMLSSRKYDYLIVNDDLAQASTLLKSIIWAERAKSRRTPAGLPIKLVVE.

In terms of domain architecture, Guanylate kinase-like spans 4-183 (GKLFVISAPS…ASTLLKSIIW (180 aa)). 11–18 (APSGAGKT) lines the ATP pocket.

Belongs to the guanylate kinase family.

The protein resides in the cytoplasm. The catalysed reaction is GMP + ATP = GDP + ADP. Essential for recycling GMP and indirectly, cGMP. This Desulfotalea psychrophila (strain LSv54 / DSM 12343) protein is Guanylate kinase.